We begin with the raw amino-acid sequence, 282 residues long: Snake venom serine protease BmSP (282 aa).

Positions 1–18 (MVLIGVLASLLILQLSYS) are cleaved as a signal peptide. Positions 19–56 (KSLDDGAKESAYDDEIQQSSWGNSTVNTTLTETVVIQL) are excised as a propeptide. N-linked (GlcNAc...) asparagine glycosylation is found at Asn-41 and Asn-45. The Peptidase S1 domain maps to 57–280 (IMGGSECYKS…YIDWIKGIIA (224 aa)). 5 disulfides stabilise this stretch: Cys-63–Cys-195, Cys-82–Cys-98, Cys-174–Cys-241, Cys-206–Cys-220, and Cys-231–Cys-256. Residue His-97 is the Charge relay system of the active site. A glycan (N-linked (GlcNAc...) asparagine) is linked at Asn-135. Asp-142 acts as the Charge relay system in catalysis. Asn-149 and Asn-153 each carry an N-linked (GlcNAc...) asparagine glycan. Ser-235 serves as the catalytic Charge relay system.

It belongs to the peptidase S1 family. Snake venom subfamily. As to quaternary structure, monomer. In terms of tissue distribution, expressed by the venom gland.

It localises to the secreted. In terms of biological role, snake venom serine protease that may act in the hemostasis system of the prey. This chain is Snake venom serine protease BmSP, found in Bungarus multicinctus (Many-banded krait).